The primary structure comprises 229 residues: Flagellar L-ring protein 1 (229 aa).

A signal peptide spans 1–18; sequence MYLRKISAPLMTMLLLNG. Residue cysteine 19 is the site of N-palmitoyl cysteine attachment. Cysteine 19 is lipidated: S-diacylglycerol cysteine.

This sequence belongs to the FlgH family. In terms of assembly, the basal body constitutes a major portion of the flagellar organelle and consists of four rings (L,P,S, and M) mounted on a central rod.

It localises to the cell outer membrane. It is found in the bacterial flagellum basal body. Functionally, assembles around the rod to form the L-ring and probably protects the motor/basal body from shearing forces during rotation. The sequence is that of Flagellar L-ring protein 1 (flgH1) from Yersinia pseudotuberculosis serotype I (strain IP32953).